The primary structure comprises 247 residues: tRNA (guanine-N(1)-)-methyltransferase (247 aa).

S-adenosyl-L-methionine-binding positions include Gly-113 and 133 to 138; that span reads IGDFVM.

Belongs to the RNA methyltransferase TrmD family. In terms of assembly, homodimer.

It is found in the cytoplasm. It catalyses the reaction guanosine(37) in tRNA + S-adenosyl-L-methionine = N(1)-methylguanosine(37) in tRNA + S-adenosyl-L-homocysteine + H(+). Specifically methylates guanosine-37 in various tRNAs. The chain is tRNA (guanine-N(1)-)-methyltransferase from Vibrio cholerae serotype O1 (strain ATCC 39541 / Classical Ogawa 395 / O395).